Consider the following 269-residue polypeptide: NAD kinase (269 aa).

Asp62 serves as the catalytic Proton acceptor. NAD(+) is bound by residues 62-63 (DG), 130-131 (NE), Lys141, Arg158, Asp160, 171-176 (TAYAMS), Ala195, and Gln229.

The protein belongs to the NAD kinase family. A divalent metal cation is required as a cofactor.

The protein resides in the cytoplasm. The enzyme catalyses NAD(+) + ATP = ADP + NADP(+) + H(+). Functionally, involved in the regulation of the intracellular balance of NAD and NADP, and is a key enzyme in the biosynthesis of NADP. Catalyzes specifically the phosphorylation on 2'-hydroxyl of the adenosine moiety of NAD to yield NADP. The protein is NAD kinase of Methanospirillum hungatei JF-1 (strain ATCC 27890 / DSM 864 / NBRC 100397 / JF-1).